Consider the following 163-residue polypeptide: Nucleotide-binding protein BPUM_1028 (163 aa).

This sequence belongs to the YajQ family.

Its function is as follows. Nucleotide-binding protein. In Bacillus pumilus (strain SAFR-032), this protein is Nucleotide-binding protein BPUM_1028.